The sequence spans 885 residues: Alanine--tRNA ligase (885 aa).

4 residues coordinate Zn(2+): His-564, His-568, Cys-676, and His-680.

The protein belongs to the class-II aminoacyl-tRNA synthetase family. Zn(2+) is required as a cofactor.

Its subcellular location is the cytoplasm. The catalysed reaction is tRNA(Ala) + L-alanine + ATP = L-alanyl-tRNA(Ala) + AMP + diphosphate. Catalyzes the attachment of alanine to tRNA(Ala) in a two-step reaction: alanine is first activated by ATP to form Ala-AMP and then transferred to the acceptor end of tRNA(Ala). Also edits incorrectly charged Ser-tRNA(Ala) and Gly-tRNA(Ala) via its editing domain. The polypeptide is Alanine--tRNA ligase (Brucella abortus (strain 2308)).